We begin with the raw amino-acid sequence, 428 residues long: Lipoamide acyltransferase component of branched-chain alpha-keto acid dehydrogenase complex (428 aa).

Residues 3–78 (THVIKMPDIG…AVGGELIRLE (76 aa)) enclose the Lipoyl-binding domain. N6-lipoyllysine is present on lysine 44. The disordered stretch occupies residues 88-145 (SPAAATPAAPVAATPEKPKEAPVAAPKAAAEAPRALRDSEAPRQRRQPGERPLASPAV). Over residues 89 to 120 (PAAATPAAPVAATPEKPKEAPVAAPKAAAEAP) the composition is skewed to low complexity. Residues 121–136 (RALRDSEAPRQRRQPG) show a composition bias toward basic and acidic residues. In terms of domain architecture, Peripheral subunit-binding (PSBD) spans 140–177 (LASPAVRQRARDLGIELQFVQGSGPAGRVLHEDLDAYL). Active-site residues include histidine 400 and aspartate 404.

It belongs to the 2-oxoacid dehydrogenase family. In terms of assembly, forms a 24-polypeptide structural core with octahedral symmetry. Requires (R)-lipoate as cofactor.

It carries out the reaction N(6)-[(R)-dihydrolipoyl]-L-lysyl-[protein] + 2-methylpropanoyl-CoA = N(6)-[(R)-S(8)-2-methylpropanoyldihydrolipoyl]-L-lysyl-[protein] + CoA. The branched-chain alpha-keto dehydrogenase complex catalyzes the overall conversion of alpha-keto acids to acyl-CoA and CO(2). It contains multiple copies of three enzymatic components: branched-chain alpha-keto acid decarboxylase (E1), lipoamide acyltransferase (E2) and lipoamide dehydrogenase (E3). This Pseudomonas aeruginosa (strain ATCC 15692 / DSM 22644 / CIP 104116 / JCM 14847 / LMG 12228 / 1C / PRS 101 / PAO1) protein is Lipoamide acyltransferase component of branched-chain alpha-keto acid dehydrogenase complex (bkdB).